The sequence spans 339 residues: 3-isopropylmalate dehydrogenase (339 aa).

Residues Arg-88, Arg-98, Arg-122, and Asp-212 each contribute to the substrate site. The Mg(2+) site is built by Asp-212, Asp-236, and Asp-240. 272 to 284 provides a ligand contact to NAD(+); the sequence is GSAPDIAGQGIAD.

Belongs to the isocitrate and isopropylmalate dehydrogenases family. LeuB type 2 subfamily. As to quaternary structure, homodimer. It depends on Mg(2+) as a cofactor. Mn(2+) is required as a cofactor.

It localises to the cytoplasm. It carries out the reaction (2R,3S)-3-isopropylmalate + NAD(+) = 4-methyl-2-oxopentanoate + CO2 + NADH. It participates in amino-acid biosynthesis; L-leucine biosynthesis; L-leucine from 3-methyl-2-oxobutanoate: step 3/4. In terms of biological role, catalyzes the oxidation of 3-carboxy-2-hydroxy-4-methylpentanoate (3-isopropylmalate) to 3-carboxy-4-methyl-2-oxopentanoate. The product decarboxylates to 4-methyl-2 oxopentanoate. This is 3-isopropylmalate dehydrogenase from Corynebacterium diphtheriae (strain ATCC 700971 / NCTC 13129 / Biotype gravis).